Consider the following 170-residue polypeptide: Small ribosomal subunit protein uS13m (170 aa).

Positions 130 to 170 are disordered; sequence LKKKPTNRKERRIFNKIKKLQDKHNKQQQKNKKSKKWKTKK. Basic residues-rich tracts occupy residues 132–147 and 155–170; these read KKPT…NKIK and KQQQ…KTKK.

It belongs to the universal ribosomal protein uS13 family. In terms of assembly, part of the small ribosomal subunit.

It localises to the mitochondrion. Located at the top of the head of the small subunit, it contacts several helices of the small subunit rRNA. This chain is Small ribosomal subunit protein uS13m (mrps13), found in Dictyostelium citrinum (Slime mold).